Here is a 182-residue protein sequence, read N- to C-terminus: DOMON domain-containing protein Y73F4A.1 (182 aa).

The N-terminal stretch at 1–18 (MFVLAIVFAFVFIPSSSS) is a signal peptide. One can recognise a DOMON domain in the interval 26 to 143 (ELVSMNWNVK…CLNWMVVPGG (118 aa)). 2 N-linked (GlcNAc...) asparagine glycosylation sites follow: Asn47 and Asn128.

The protein localises to the secreted. In Caenorhabditis elegans, this protein is DOMON domain-containing protein Y73F4A.1.